Here is a 433-residue protein sequence, read N- to C-terminus: Pyrimidine-nucleoside phosphorylase (433 aa).

Position 81–83 (81–83 (KHS)) interacts with phosphate. Positions 88 and 90 each coordinate K(+). Phosphate-binding positions include Thr-92, 108 to 110 (KMS), and Thr-120. Positions 168 and 187 each coordinate substrate. K(+) is bound by residues Leu-243, Ala-246, and Glu-255.

The protein belongs to the thymidine/pyrimidine-nucleoside phosphorylase family. As to quaternary structure, homodimer. K(+) serves as cofactor.

The catalysed reaction is uridine + phosphate = alpha-D-ribose 1-phosphate + uracil. It carries out the reaction thymidine + phosphate = 2-deoxy-alpha-D-ribose 1-phosphate + thymine. The enzyme catalyses 2'-deoxyuridine + phosphate = 2-deoxy-alpha-D-ribose 1-phosphate + uracil. Functionally, catalyzes phosphorolysis of the pyrimidine nucleosides uridine, thymidine and 2'-deoxyuridine with the formation of the corresponding pyrimidine base and ribose-1-phosphate. The chain is Pyrimidine-nucleoside phosphorylase (pdp) from Staphylococcus aureus (strain MSSA476).